The chain runs to 68 residues: Small integral membrane protein 10-like protein 3 (68 aa).

As to expression, expressed specifically in salivary glands (at protein level).

This is Small integral membrane protein 10-like protein 3 from Mus musculus (Mouse).